Here is a 361-residue protein sequence, read N- to C-terminus: UPF0283 membrane protein mlr0776 (361 aa).

Residues 1–33 (MTAPRKPAAFRIEPEAAPTQETPKARQAELSRK) are disordered. A compositionally biased stretch (basic and acidic residues) spans 23–32 (PKARQAELSR). Helical transmembrane passes span 73-93 (LFGSIFFGAIGVLVSLAVGLW) and 108-128 (LGWLAAGMAAIAVLALVVILI).

The protein belongs to the UPF0283 family.

The protein resides in the cell inner membrane. The chain is UPF0283 membrane protein mlr0776 from Mesorhizobium japonicum (strain LMG 29417 / CECT 9101 / MAFF 303099) (Mesorhizobium loti (strain MAFF 303099)).